Here is a 442-residue protein sequence, read N- to C-terminus: tRNA-2-methylthio-N(6)-dimethylallyladenosine synthase (442 aa).

The region spanning 2 to 120 (KKVFIRTFGC…LPKMIVDKET (119 aa)) is the MTTase N-terminal domain. 6 residues coordinate [4Fe-4S] cluster: cysteine 11, cysteine 49, cysteine 83, cysteine 157, cysteine 161, and cysteine 164. The Radical SAM core domain occupies 143–375 (RVEGGAAFVS…NEVIEAETAR (233 aa)). Residues 378–441 (QTMIGTVQRC…TFSLRGKIVE (64 aa)) form the TRAM domain.

Belongs to the methylthiotransferase family. MiaB subfamily. As to quaternary structure, monomer. It depends on [4Fe-4S] cluster as a cofactor.

It is found in the cytoplasm. It catalyses the reaction N(6)-dimethylallyladenosine(37) in tRNA + (sulfur carrier)-SH + AH2 + 2 S-adenosyl-L-methionine = 2-methylsulfanyl-N(6)-dimethylallyladenosine(37) in tRNA + (sulfur carrier)-H + 5'-deoxyadenosine + L-methionine + A + S-adenosyl-L-homocysteine + 2 H(+). Catalyzes the methylthiolation of N6-(dimethylallyl)adenosine (i(6)A), leading to the formation of 2-methylthio-N6-(dimethylallyl)adenosine (ms(2)i(6)A) at position 37 in tRNAs that read codons beginning with uridine. The chain is tRNA-2-methylthio-N(6)-dimethylallyladenosine synthase from Neisseria gonorrhoeae (strain ATCC 700825 / FA 1090).